A 216-amino-acid chain; its full sequence is Large ribosomal subunit protein bL25 (216 aa).

The segment at 191–216 (LVSAESEEDEDAPAADEVPATEVSEE) is disordered. A compositionally biased stretch (acidic residues) spans 195–204 (ESEEDEDAPA).

The protein belongs to the bacterial ribosomal protein bL25 family. CTC subfamily. As to quaternary structure, part of the 50S ribosomal subunit; part of the 5S rRNA/L5/L18/L25 subcomplex. Contacts the 5S rRNA. Binds to the 5S rRNA independently of L5 and L18.

Its function is as follows. This is one of the proteins that binds to the 5S RNA in the ribosome where it forms part of the central protuberance. This Jannaschia sp. (strain CCS1) protein is Large ribosomal subunit protein bL25.